A 180-amino-acid polypeptide reads, in one-letter code: MILSDGGIKSYLRRGLMKIEPFDENQVRENGVDLTIGHQYARFKNTEDVLDVTKEEDLSKYYELGFMDDEGIVIKPYEHVLLHTREYIEMPADLVGLVNLKSSFARLGLYIPPTVVDAGFKGEIVIEIIGSSFPVRVRPGVPFIHLVFLRTDSPVLRDYSVRGHYQGQRGIRLPKLPIKL.

Residues 101 to 106 (KSSFAR) and aspartate 117 contribute to the dCTP site. Residue glutamate 127 is the Proton donor/acceptor of the active site. Residues tyrosine 159 and glutamine 168 each contribute to the dCTP site.

It belongs to the dCTP deaminase family. In terms of assembly, homotrimer.

The catalysed reaction is dCTP + H2O + H(+) = dUTP + NH4(+). The protein operates within pyrimidine metabolism; dUMP biosynthesis; dUMP from dCTP (dUTP route): step 1/2. Catalyzes the deamination of dCTP to dUTP. The polypeptide is dCTP deaminase (Ignicoccus hospitalis (strain KIN4/I / DSM 18386 / JCM 14125)).